The sequence spans 399 residues: S-adenosylmethionine synthase (399 aa).

Histidine 17 contacts ATP. Aspartate 19 contacts Mg(2+). Residue glutamate 45 participates in K(+) binding. L-methionine-binding residues include glutamate 58 and glutamine 101. The interval 101–111 is flexible loop; sequence QSADIAMGVDQ. ATP is bound by residues 177–179, 244–245, aspartate 253, 259–260, alanine 276, and lysine 280; these read DGK, RF, and RK. Aspartate 253 serves as a coordination point for L-methionine. L-methionine is bound at residue lysine 284.

This sequence belongs to the AdoMet synthase family. Homotetramer; dimer of dimers. Mg(2+) serves as cofactor. It depends on K(+) as a cofactor.

Its subcellular location is the cytoplasm. The catalysed reaction is L-methionine + ATP + H2O = S-adenosyl-L-methionine + phosphate + diphosphate. The protein operates within amino-acid biosynthesis; S-adenosyl-L-methionine biosynthesis; S-adenosyl-L-methionine from L-methionine: step 1/1. Functionally, catalyzes the formation of S-adenosylmethionine (AdoMet) from methionine and ATP. The overall synthetic reaction is composed of two sequential steps, AdoMet formation and the subsequent tripolyphosphate hydrolysis which occurs prior to release of AdoMet from the enzyme. In Bacillus thuringiensis subsp. konkukian (strain 97-27), this protein is S-adenosylmethionine synthase.